Reading from the N-terminus, the 780-residue chain is Protein phosphatase 1 regulatory subunit 21 (780 aa).

Coiled coils occupy residues 1–209 (MASA…NLHE) and 556–605 (ESRE…DRLR). Residues 84-104 (EPRGKKNKKSGESSSQLSQEQ) are disordered. Low complexity predominate over residues 95 to 104 (ESSSQLSQEQ). Phosphothreonine is present on threonine 652. Positions 694-742 (AECRALSKRLALAEKSKETLTEEMRLASQNISRLQDELMTTKRSYEDQL) form a coiled coil.

Component of the FERRY complex, composed of five subunits: TBCK, PPP1R21, FERRY3, CRYZL1 and GATAD1, with a ratio of 1:2:1:2:4 respectively. PPP1R21 serves as a binding hub connecting all five complex subunits to mediate the binding to specific mitochondrial mRNAs. Interacts with the GTP-bound form of RAB5A (via its C-terminal region); linking the mRNP complex onto trafficking endosomes for active mRNA transport. Interacts with PPP1CA. In terms of tissue distribution, expressed at 16 dpc in the cortex (at protein level).

The protein resides in the early endosome. Its function is as follows. Component of the FERRY complex (Five-subunit Endosomal Rab5 and RNA/ribosome intermediary). The FERRY complex directly interacts with mRNAs and RAB5A, and functions as a RAB5A effector involved in the localization and the distribution of specific mRNAs most likely by mediating their endosomal transport. The complex recruits mRNAs and ribosomes to early endosomes through direct mRNA-interaction. In the complex, PPP1R21 serves as a binding hub connecting all five complex subunits and mediating the binding to mRNA and early endosomes via RAB5A. Putative regulator of protein phosphatase 1 (PP1) activity. May play a role in the endosomal sorting process or in endosome maturation pathway. The polypeptide is Protein phosphatase 1 regulatory subunit 21 (Ppp1r21) (Mus musculus (Mouse)).